A 56-amino-acid chain; its full sequence is Hydrophobic protein LTI6A (56 aa).

The next 2 membrane-spanning stretches (helical) occupy residues 11–31 and 34–54; these read IILA…CGIE and ICLL…VWVI.

The protein belongs to the UPF0057 (PMP3) family. Expressed in shoot of cold stressed seedlings.

The protein resides in the membrane. Its function is as follows. Plays a role in the regulation of membrane potential. Could mediate a proton leak. This is Hydrophobic protein LTI6A (LTI6A) from Oryza sativa subsp. japonica (Rice).